A 1172-amino-acid polypeptide reads, in one-letter code: Phytochrome B (1172 aa).

A compositionally biased stretch (gly residues) spans 1–16; that stretch reads MVSGVGGSGGGRGGGR. The segment at 1–54 is disordered; sequence MVSGVGGSGGGRGGGRGGEEEPSSSHTPNNRRGGEQAQSSGTKSLRPRSNTESM. The span at 24–54 shows a compositional bias: polar residues; sequence SSHTPNNRRGGEQAQSSGTKSLRPRSNTESM. Residues 252–433 form the GAF domain; the sequence is DIKLLCDTVV…AFGLQLNMEL (182 aa). Phytochromobilin is bound at residue Cys-357. 2 PAS domains span residues 652-723 and 786-857; these read VARE…LRGD and DYKA…MIVL. In terms of domain architecture, Histidine kinase spans 934–1153; sequence YICQVIKNPL…LIILELPVPR (220 aa).

The protein belongs to the phytochrome family. Homodimer. Interacts with ADO1 and PKS4. Stabilized by interactions with PAPP5 and FYPP3 which are enhanced in the phosphorylated Pfr form. Interacts with VOZ1 and VOZ2. Binds, via its photosensory domain, to PTAC12/HMR/PAP5 when photoactivated; this interaction stimulates its localization to photobodies. Interacts with CRY1 specifically when in the dark/far-red (Pr) state, but not when red light-activated (Pfr). Interacts with PIF4 and PIF5 in response to low blue light (LBL). Component of a red light-dependent nuclear complex made of PHL, PHYB and CO. Interacts directly with PHL. Binds to UNE10/PIF8 when red light-activated (Pfr). When light-activated, interacts with PCH1 and PCHL. Associated with DRT111/RSN2/SFPS, SMP2 and SWAP1 in nuclear photobodies upon response to red light (Pfr form). In terms of processing, contains one covalently linked phytochromobilin chromophore. As to expression, expressed in fruits, flowers, leaves, stems, seedlings and roots.

The protein localises to the cytoplasm. It is found in the nucleus. Its subcellular location is the nucleoplasm. The protein resides in the nucleus speckle. Functionally, regulatory photoreceptor which exists in two forms that are reversibly interconvertible by light: the Pr form that absorbs maximally in the red region of the spectrum and the Pfr form that absorbs maximally in the far-red region. Photoconversion of Pr to Pfr induces an array of morphogenetic responses, whereas reconversion of Pfr to Pr cancels the induction of those responses. Pfr controls the expression of a number of nuclear genes including those encoding the small subunit of ribulose-bisphosphate carboxylase, chlorophyll A/B binding protein, protochlorophyllide reductase, rRNA, etc. It also controls the expression of its own gene(s) in a negative feedback fashion. Involved in the flowering time regulation. Involved in light-regulated circadian phase control that triggers stomatal aperture, stomatal conductance, and CO(2) assimilation. Implicated in red light perception, and, to a lower extent, in blue light signaling. Controls thermomorphogenesis in the daytime and regulates temperature responses by associating with the promoters of key target genes in a temperature-dependent manner and subsequently repressing their expression in a PIF4-dependent manner (temperature-responsive transcriptional regulator); this process requires PTAC12/HMR/PAP5 (transcriptional activator). Thermal timer that integrates temperature information over the course of the night. Detabilizes UNE10/PIF8 in red light. This chain is Phytochrome B, found in Arabidopsis thaliana (Mouse-ear cress).